The sequence spans 93 residues: Integration host factor subunit beta (93 aa).

Belongs to the bacterial histone-like protein family. As to quaternary structure, heterodimer of an alpha and a beta chain.

This protein is one of the two subunits of integration host factor, a specific DNA-binding protein that functions in genetic recombination as well as in transcriptional and translational control. In Cereibacter sphaeroides (strain KD131 / KCTC 12085) (Rhodobacter sphaeroides), this protein is Integration host factor subunit beta.